Consider the following 198-residue polypeptide: Nucleoid occlusion factor SlmA (198 aa).

An HTH tetR-type domain is found at 10–70 (NRREEILQSL…SLIEFIEDSL (61 aa)). The H-T-H motif DNA-binding region spans 33–52 (TTAKLAASVGVSEAALYRHF). Positions 117-145 (EQDRLQGRINQLFERIEAQLRQVMREKKM) form a coiled coil.

It belongs to the nucleoid occlusion factor SlmA family. In terms of assembly, homodimer. Interacts with FtsZ.

The protein resides in the cytoplasm. The protein localises to the nucleoid. Functionally, required for nucleoid occlusion (NO) phenomenon, which prevents Z-ring formation and cell division over the nucleoid. Acts as a DNA-associated cell division inhibitor that binds simultaneously chromosomal DNA and FtsZ, and disrupts the assembly of FtsZ polymers. SlmA-DNA-binding sequences (SBS) are dispersed on non-Ter regions of the chromosome, preventing FtsZ polymerization at these regions. This is Nucleoid occlusion factor SlmA from Klebsiella pneumoniae subsp. pneumoniae (strain ATCC 700721 / MGH 78578).